A 517-amino-acid chain; its full sequence is Ribonuclease Y (517 aa).

Residues 1-21 (MIESLIALIAAIVGLGIGYLV) form a helical membrane-spanning segment. The 67-residue stretch at 207–273 (LINVINIKND…TKVIELLVED (67 aa)) folds into the KH domain. In terms of domain architecture, HD spans 333–426 (ALAHSLEVAH…VCAADTLSAA (94 aa)).

This sequence belongs to the RNase Y family.

It is found in the cell membrane. Endoribonuclease that initiates mRNA decay. The protein is Ribonuclease Y of Campylobacter jejuni subsp. jejuni serotype O:23/36 (strain 81-176).